Consider the following 322-residue polypeptide: Fructose-1,6-bisphosphatase class 1 3 (322 aa).

E84, D103, L105, and D106 together coordinate Mg(2+). Substrate contacts are provided by residues 106–109, N198, and K262; that span reads DGSS. A Mg(2+)-binding site is contributed by E268.

This sequence belongs to the FBPase class 1 family. As to quaternary structure, homotetramer. The cofactor is Mg(2+).

Its subcellular location is the cytoplasm. It catalyses the reaction beta-D-fructose 1,6-bisphosphate + H2O = beta-D-fructose 6-phosphate + phosphate. It functions in the pathway carbohydrate biosynthesis; gluconeogenesis. In Pseudoalteromonas translucida (strain TAC 125), this protein is Fructose-1,6-bisphosphatase class 1 3.